The chain runs to 172 residues: Shikimate kinase (172 aa).

14 to 19 (GAGKST) lines the ATP pocket. Serine 18 is a Mg(2+) binding site. Substrate-binding residues include aspartate 36, arginine 60, and glycine 82. Arginine 120 contacts ATP. Position 139 (arginine 139) interacts with substrate. ATP is bound at residue glutamine 156.

This sequence belongs to the shikimate kinase family. In terms of assembly, monomer. Requires Mg(2+) as cofactor.

It localises to the cytoplasm. The catalysed reaction is shikimate + ATP = 3-phosphoshikimate + ADP + H(+). It functions in the pathway metabolic intermediate biosynthesis; chorismate biosynthesis; chorismate from D-erythrose 4-phosphate and phosphoenolpyruvate: step 5/7. Functionally, catalyzes the specific phosphorylation of the 3-hydroxyl group of shikimic acid using ATP as a cosubstrate. The polypeptide is Shikimate kinase (Vibrio vulnificus (strain CMCP6)).